Reading from the N-terminus, the 450-residue chain is Sensor histidine kinase EnvZ (450 aa).

At 1–15 (MRRLRFSPRSSFART) the chain is on the cytoplasmic side. Residues 16-35 (LLLIVTLLFASLVTTYLVVL) traverse the membrane as a helical segment. Over 36 to 158 (NFAILPSLQQ…LTEIHQGDFS (123 aa)) the chain is Periplasmic. The polyP-periplasmic motif signature appears at 71 to 75 (VVPPA). A helical membrane pass occupies residues 159-179 (PLFRYTLAIMLLAIGGAWLFI). The HAMP domain occupies 180 to 232 (RIQNRPLVDLEHAALQVGKGIIPPPLREYGASEVRSVTRAFNHMAAGVKQLAD). At 180–450 (RIQNRPLVDL…TRAQGTTKEG (271 aa)) the chain is on the cytoplasmic side. Residues 201 to 205 (IPPPL) carry the polyP-cytoplasmic motif motif. The segment at 223–289 (MAAGVKQLAD…IIEQFIDYLR (67 aa)) is cytoplasmic dimerization domain (CDD), when dimerized forms osmosensitive core. Residues 240 to 440 (GVSHDLRTPL…SIRAWLPVPV (201 aa)) form the Histidine kinase domain. ATP-binding positions include His243, 347–351 (NAARY), Asp373, 392–393 (RG), and 402–406 (TGLGL). His243 is modified (phosphohistidine; by autocatalysis).

Homodimer. Interacts with MzrA. In terms of processing, autophosphorylated. Incubation of isolated EnvZ C-terminal fragment (residues 180-450) with increasing levels of NaCl or sucrose increases its autophosphorylation.

Its subcellular location is the cell inner membrane. It catalyses the reaction ATP + protein L-histidine = ADP + protein N-phospho-L-histidine.. Activity is modulated by MzrA. In the presence of 0.2 M NaCl, 2.0 mM sodium cholate (bile salts) decreases expression from the ompC promoter; how this is mediated is unknown. Autophosphorylation is inhibited by the angucycline antibiotic waldiomycin in a non-competitive manner; waldiomycin prevents dimerization of the cytoplasmic domain and autophosphorylation. Functionally, member of the two-component regulatory system EnvZ/OmpR involved in osmoregulation (particularly of genes ompF and ompC) as well as other genes. EnvZ functions as a membrane-associated protein kinase that phosphorylates OmpR in response to environmental signals; at low osmolarity OmpR activates ompF transcription, while at high osmolarity it represses ompF and activates ompC transcription. Also dephosphorylates OmpR in the presence of ATP. The cytoplasmic dimerization domain (CDD) forms an osmosensitive core; increasing osmolarity stabilizes this segment (possibly by its contraction), enhancing the autophosphorylation rate and consequently, downstream phosphotransfer to OmpR and signaling. Autophosphorylation is greater when full-length EnvZ is reconstituted in a lipid environment, lipid-mediated allostery impacts the kinase function of EnvZ. Involved in acid stress response; this requires EnvZ but not OmpR phosphorylation, and suggests that EnvZ senses cytoplasmic acidic pH. This is Sensor histidine kinase EnvZ (envZ) from Escherichia coli (strain K12).